A 132-amino-acid polypeptide reads, in one-letter code: Small ribosomal subunit protein uS8 (132 aa).

The protein belongs to the universal ribosomal protein uS8 family. In terms of assembly, part of the 30S ribosomal subunit. Contacts proteins S5 and S12.

In terms of biological role, one of the primary rRNA binding proteins, it binds directly to 16S rRNA central domain where it helps coordinate assembly of the platform of the 30S subunit. This is Small ribosomal subunit protein uS8 from Nitrobacter winogradskyi (strain ATCC 25391 / DSM 10237 / CIP 104748 / NCIMB 11846 / Nb-255).